Reading from the N-terminus, the 165-residue chain is Putative universal stress protein SH1215 (165 aa).

It belongs to the universal stress protein A family.

It localises to the cytoplasm. The sequence is that of Putative universal stress protein SH1215 from Staphylococcus haemolyticus (strain JCSC1435).